A 118-amino-acid polypeptide reads, in one-letter code: Crustacean hyperglycemic hormones 2 (118 aa).

The signal sequence occupies residues M1–A22. Disulfide bonds link C51–C87, C67–C83, and C70–C96. Position 116 is a valine amide (V116).

This sequence belongs to the arthropod CHH/MIH/GIH/VIH hormone family.

The protein resides in the secreted. Hormone found in the sinus gland of isopods and decapods which controls the blood sugar level. Has a secretagogue action over the amylase released from the midgut gland. May act as a stress hormone and may be involved in the control of molting and reproduction. The chain is Crustacean hyperglycemic hormones 2 (CHH2) from Penaeus monodon (Giant tiger prawn).